Reading from the N-terminus, the 467-residue chain is Chromosomal replication initiator protein DnaA (467 aa).

The domain I, interacts with DnaA modulators stretch occupies residues 1–74; that stretch reads MSADVWSQGC…ESVLSDLAGK (74 aa). The segment at 74–130 is domain II; that stretch reads KPVRLDLQLAAREAPPRPSSDAPRSNGHPQAAGQWLGAPSSSNAGAYTQASAPTPTH. Residues 85 to 127 form a disordered region; it reads REAPPRPSSDAPRSNGHPQAAGQWLGAPSSSNAGAYTQASAPT. The segment covering 112 to 127 has biased composition (polar residues); the sequence is PSSSNAGAYTQASAPT. The segment at 131 to 347 is domain III, AAA+ region; it reads RLNTALTFDT…GALRKVLAYA (217 aa). The ATP site is built by Gly175, Gly177, Lys178, and Thr179. The segment at 348–467 is domain IV, binds dsDNA; sequence RFSQKDINIA…LHVLEQTLKG (120 aa).

It belongs to the DnaA family. Oligomerizes as a right-handed, spiral filament on DNA at oriC.

It is found in the cytoplasm. Functionally, plays an essential role in the initiation and regulation of chromosomal replication. ATP-DnaA binds to the origin of replication (oriC) to initiate formation of the DNA replication initiation complex once per cell cycle. Binds the DnaA box (a 9 base pair repeat at the origin) and separates the double-stranded (ds)DNA. Forms a right-handed helical filament on oriC DNA; dsDNA binds to the exterior of the filament while single-stranded (ss)DNA is stabiized in the filament's interior. The ATP-DnaA-oriC complex binds and stabilizes one strand of the AT-rich DNA unwinding element (DUE), permitting loading of DNA polymerase. After initiation quickly degrades to an ADP-DnaA complex that is not apt for DNA replication. Binds acidic phospholipids. This Methylibium petroleiphilum (strain ATCC BAA-1232 / LMG 22953 / PM1) protein is Chromosomal replication initiator protein DnaA.